A 512-amino-acid polypeptide reads, in one-letter code: 3-ketoacyl-CoA synthase 9 (512 aa).

The next 2 membrane-spanning stretches (helical) occupy residues 44 to 64 (LITH…VTEI) and 83 to 103 (LVAF…YIMS). Positions 100–389 (YIMSRPRSVY…FFMTLVTKKL (290 aa)) constitute an FAE domain. Catalysis depends on residues C244, H323, H407, H411, H440, and N444.

The protein belongs to the thiolase-like superfamily. Chalcone/stilbene synthases family. In terms of tissue distribution, expressed in seedlings, stems, leaves, flowers and siliques. Expressed in roots, leaves, and stems, including epidermis, silique walls, sepals, the upper portion of the styles, and seed coats, but not in developing embryos.

The protein resides in the endoplasmic reticulum membrane. It catalyses the reaction a very-long-chain acyl-CoA + malonyl-CoA + H(+) = a very-long-chain 3-oxoacyl-CoA + CO2 + CoA. It functions in the pathway lipid metabolism; fatty acid biosynthesis. Involved in the elongation of C22 to C24 fatty acids, which are precursors for the biosynthesis of cuticular waxes, aliphatic suberins, and membrane lipids, including sphingolipids and phospholipids. The chain is 3-ketoacyl-CoA synthase 9 from Arabidopsis thaliana (Mouse-ear cress).